We begin with the raw amino-acid sequence, 131 residues long: uncharacterized protein (131 aa).

The 116-residue stretch at 1–116 (MYMARMLSEM…EMLEASSIQC (116 aa)) folds into the CMP/dCMP-type deaminase domain.

This is an uncharacterized protein from Caenorhabditis elegans.